A 631-amino-acid chain; its full sequence is MQGGNSGVRKREEEGGGEGAVAAPPAIDFPAESSDLKYDESDVPAELQVLKEPLQQPTFPFAVANQLLLVSLLEHLSHVHEPNPLRSRQVFKLLCQTFIKMGLLSSFTCSDEFSSLRLHHNRAITHLMRSAKERVRQDPCEDVSHIQKIRSREVAFEAQTSRYLNEFEEVAILGKGGYGRVYKVRNKLDGQYYAIKKILIKGATKTDCMKVLREVKVLAGLQHPNIVGYHTAWIEHVHVIQPRADRAAIELPTLEVLSDQEEDREQYDVKNDESSSSSIVFAEPTPEKGKRFGESDTENQNDKSVKYTTSLVIRDSGELESTLELQENDLAGLSTSSIMEQQLPLRRNSHLDDSFTSTEESSEENVNFLGQTEAQYHLMLHIQMQLCELSLWDWIAERNKRSRECVDESACPYVMANVATKIFQELVEGVFYIHNMGIVHRDLKPRNIFLHGPDQQVKIGDFGLACTDILQKNADWTNRNGKRTPTHTSRVGTCLYASPEQLEGSEYDAKSDMYSLGVILLELFQPFGTEMERAEVLTGLRTGQLPESLSKRCPVQAKYIQHLTRRNSSQRPSAVQLLQSELFQTSGNVNFTLQMKIIEQEKEIAELKKQLNLLSQDKGVRDDGKDGGVPV.

The segment at 1–34 is disordered; that stretch reads MQGGNSGVRKREEEGGGEGAVAAPPAIDFPAESS. The SIFI-degron signature appears at 85–104; that stretch reads LRSRQVFKLLCQTFIKMGLL. Residues 167 to 583 form the Protein kinase domain; the sequence is FEEVAILGKG…AVQLLQSELF (417 aa). Residues 173–181 and Lys196 each bind ATP; that span reads LGKGGYGRV. Residues 260-301 form a disordered region; sequence QEEDREQYDVKNDESSSSSIVFAEPTPEKGKRFGESDTENQN. Thr285 is subject to Phosphothreonine. Residues 285-301 are compositionally biased toward basic and acidic residues; that stretch reads TPEKGKRFGESDTENQN. The stretch at 410 to 415 is one HRM 1 repeat; it reads ACPYVM. The Proton acceptor role is filled by Asp442. A phosphothreonine; by autocatalysis mark is found at Thr486 and Thr488. Position 493 is a phosphothreonine (Thr493). The stretch at 552–557 is one HRM 2 repeat; that stretch reads RCPVQA.

Belongs to the protein kinase superfamily. Ser/Thr protein kinase family. GCN2 subfamily. As to quaternary structure, synthesized in an inactive form that binds to the N-terminal domain of CDC37. Has to be associated with a multiprotein complex containing Hsp90, CDC37 and PPP5C for maturation and activation by autophosphorylation. The phosphatase PPP5C modulates this activation. Homodimer; homodimerizes in presence of heme, forming a disulfide-linked inactive homodimer. Interacts with DELE1; binds both to full-length DELE1 and processed form of DELE1 (S-DELE1) in response to stress, leading to activate its protein kinase activity and trigger the integrated stress response (ISR). Activated by autophosphorylation; phosphorylated predominantly on serine and threonine residues, but also on tyrosine residues. Autophosphorylation at Thr-488 is required for kinase activation. The active autophosphorylated form apparently is largely refractory to cellular heme fluctuations. Post-translationally, ubiquitinated and degraded by the SIFI complex once the mitochondrial stress has been resolved, thereby providing stress response silencing. Within the SIFI complex, UBR4 initiates ubiquitin chain that are further elongated or branched by KCMF1.

The protein resides in the cytoplasm. It catalyses the reaction L-seryl-[protein] + ATP = O-phospho-L-seryl-[protein] + ADP + H(+). The enzyme catalyses L-threonyl-[protein] + ATP = O-phospho-L-threonyl-[protein] + ADP + H(+). With respect to regulation, in normal conditions, the protein kinase activity is inhibited; inhibition is relieved by various stress conditions. Inhibited by heme: in presence of heme, forms a disulfide-linked inactive homodimer. Heme depletion relieves inhibition and stimulates kinase activity by autophosphorylation. Inhibited by the heme metabolites biliverdin and bilirubin. Induced by oxidative stress generated by arsenite treatment. Binding of nitric oxide (NO) to the heme iron in the N-terminal heme-binding domain activates the kinase activity, while binding of carbon monoxide (CO) suppresses kinase activity. Protein kinase activity is also activated upon binding to DELE1 in response to various stress, triggering the integrated stress response (ISR): activated by full-length DELE1 in response to iron deficiency, while it is activated by the processed form of DELE1 (S-DELE1) in response to mitochondrial stress. Functionally, metabolic-stress sensing protein kinase that phosphorylates the alpha subunit of eukaryotic translation initiation factor 2 (EIF2S1/eIF-2-alpha) in response to various stress conditions. Key activator of the integrated stress response (ISR) required for adaptation to various stress, such as heme deficiency, oxidative stress, osmotic shock, mitochondrial dysfunction and heat shock. EIF2S1/eIF-2-alpha phosphorylation in response to stress converts EIF2S1/eIF-2-alpha in a global protein synthesis inhibitor, leading to a global attenuation of cap-dependent translation, while concomitantly initiating the preferential translation of ISR-specific mRNAs, such as the transcriptional activator ATF4, and hence allowing ATF4-mediated reprogramming. Acts as a key sensor of heme-deficiency: in normal conditions, binds hemin via a cysteine thiolate and histidine nitrogenous coordination, leading to inhibit the protein kinase activity. This binding occurs with moderate affinity, allowing it to sense the heme concentration within the cell: heme depletion relieves inhibition and stimulates kinase activity, activating the ISR. Thanks to this unique heme-sensing capacity, plays a crucial role to shut off protein synthesis during acute heme-deficient conditions. In red blood cells (RBCs), controls hemoglobin synthesis ensuring a coordinated regulation of the synthesis of its heme and globin moieties. It thereby plays an essential protective role for RBC survival in anemias of iron deficiency. Iron deficiency also triggers activation by full-length DELE1. Also activates the ISR in response to mitochondrial dysfunction: HRI/EIF2AK1 protein kinase activity is activated upon binding to the processed form of DELE1 (S-DELE1), thereby promoting the ATF4-mediated reprogramming. Also acts as an activator of mitophagy in response to mitochondrial damage: catalyzes phosphorylation of eIF-2-alpha (EIF2S1) following activation by S-DELE1, thereby promoting mitochondrial localization of EIF2S1, triggering PRKN-independent mitophagy. The chain is Eukaryotic translation initiation factor 2-alpha kinase 1 from Macaca fascicularis (Crab-eating macaque).